Reading from the N-terminus, the 61-residue chain is Alpha-conotoxin EIIA (61 aa).

The signal sequence occupies residues 1–16 (MFIVFLLVVLATTVGS). The propeptide occupies 17-40 (FTLDRVLEGRNAAAIDNALDQRDP). Pyrrolidone carboxylic acid is present on glutamine 43. Hydroxyproline is present on proline 45. Intrachain disulfides connect cysteine 47–cysteine 53 and cysteine 48–cysteine 58. Cysteine 58 carries the cysteine amide modification.

It belongs to the conotoxin A superfamily. Expressed by the venom duct.

The protein resides in the secreted. Functionally, alpha-conotoxins bind to the nicotinic acetylcholine receptors (nAChR) and inhibit them. This peptide potently blocks muscular nicotinic acetylcholine receptor (CHRNA1-CHRNB1-CHRNG-CHRND), and has no effect on neuronal receptors. It is able to totally displace [125I]-Bgtx from the Torpedo receptor with a complete inhibition in the high micromolar range. It produces a biphasic inhibition curve which fits nicely with a two-site model (Ki of 0.46 and 105 nM). The polypeptide is Alpha-conotoxin EIIA (Conus ermineus (Agate cone)).